Here is a 211-residue protein sequence, read N- to C-terminus: Protein-L-isoaspartate O-methyltransferase (211 aa).

The active site involves Ser62.

This sequence belongs to the methyltransferase superfamily. L-isoaspartyl/D-aspartyl protein methyltransferase family.

It is found in the cytoplasm. The enzyme catalyses [protein]-L-isoaspartate + S-adenosyl-L-methionine = [protein]-L-isoaspartate alpha-methyl ester + S-adenosyl-L-homocysteine. Catalyzes the methyl esterification of L-isoaspartyl residues in peptides and proteins that result from spontaneous decomposition of normal L-aspartyl and L-asparaginyl residues. It plays a role in the repair and/or degradation of damaged proteins. The sequence is that of Protein-L-isoaspartate O-methyltransferase from Shewanella baltica (strain OS223).